A 224-amino-acid chain; its full sequence is MWYIIVIIIIIIILNLFIIILLTLKILDDIQELYPNPPIVPPPTSPPIVPLPTPPPTPTPSPPSPTPPPTPIPPTPTPTPPPTPIPPTPTPTPPPSPIPPTPTPSPPPSPIPPTPTPSPPPSPIPPTPTPSPPPSPSPLGEPMYYPSNIDTNEALINFLRPLCATDRTRATYAVPWNCNGIFHCNYFSIPFYILSCHNNAYSFVNDGCIDFNSSDCPLYPLNVL.

A compositionally biased stretch (pro residues) spans 44–139 (TSPPIVPLPT…PSPPPSPSPL (96 aa)). Positions 44 to 145 (TSPPIVPLPT…PSPLGEPMYY (102 aa)) are disordered.

This is an uncharacterized protein from Lepidoptera (butterflies and moths).